We begin with the raw amino-acid sequence, 155 residues long: Interleukin-2 (155 aa).

The first 20 residues, 1–20, serve as a signal peptide directing secretion; it reads MYKMQLVACIALSLVLITNS. A glycan (O-linked (GalNAc...) threonine) is linked at Thr-23. A disulfide bridge links Cys-77 with Cys-125.

It belongs to the IL-2 family.

It localises to the secreted. Cytokine produced by activated CD4-positive helper T-cells and to a lesser extend activated CD8-positive T-cells and natural killer (NK) cells that plays pivotal roles in the immune response and tolerance. Binds to a receptor complex composed of either the high-affinity trimeric IL-2R (IL2RA/CD25, IL2RB/CD122 and IL2RG/CD132) or the low-affinity dimeric IL-2R (IL2RB and IL2RG). Interaction with the receptor leads to oligomerization and conformation changes in the IL-2R subunits resulting in downstream signaling starting with phosphorylation of JAK1 and JAK3. In turn, JAK1 and JAK3 phosphorylate the receptor to form a docking site leading to the phosphorylation of several substrates including STAT5. This process leads to activation of several pathways including STAT, phosphoinositide-3-kinase/PI3K and mitogen-activated protein kinase/MAPK pathways. Functions as a T-cell growth factor and can increase NK-cell cytolytic activity as well. Promotes strong proliferation of activated B-cells and subsequently immunoglobulin production. Plays a pivotal role in regulating the adaptive immune system by controlling the survival and proliferation of regulatory T-cells, which are required for the maintenance of immune tolerance. Moreover, participates in the differentiation and homeostasis of effector T-cell subsets, including Th1, Th2, Th17 as well as memory CD8-positive T-cells. In Dasypus novemcinctus (Nine-banded armadillo), this protein is Interleukin-2 (IL2).